A 197-amino-acid chain; its full sequence is DNA-directed RNA polymerases I, II, and III subunit rpabc1 (197 aa).

The protein belongs to the archaeal Rpo5/eukaryotic RPB5 RNA polymerase subunit family. In terms of assembly, component of the RNA polymerase I (Pol I), RNA polymerase II (Pol II) and RNA polymerase III (Pol III) complexes consisting of at least 13, 12 and 17 subunits, respectively. In RNA Pol II, this subunit is present in 2-fold molar excess over the other subunits.

It localises to the nucleus. DNA-dependent RNA polymerase catalyzes the transcription of DNA into RNA using the four ribonucleoside triphosphates as substrates. Common component of RNA polymerases I, II and III which synthesize ribosomal RNA precursors, mRNA precursors and many functional non-coding RNAs, and small RNAs, such as 5S rRNA and tRNAs, respectively. Pol II is the central component of the basal RNA polymerase II transcription machinery. Pols are composed of mobile elements that move relative to each other. In Pol II, RPB5 is part of the lower jaw surrounding the central large cleft and thought to grab the incoming DNA template. Seems to be the major component in this process. This Dictyostelium discoideum (Social amoeba) protein is DNA-directed RNA polymerases I, II, and III subunit rpabc1 (polr2e).